The sequence spans 1241 residues: DNA-directed RNA polymerase subunit beta (1241 aa).

Residues 1186-1210 (EDEIVPTAEKRSSNQDEEALELVDN) are disordered. The span at 1200–1210 (QDEEALELVDN) shows a compositional bias: acidic residues.

The protein belongs to the RNA polymerase beta chain family. In terms of assembly, the RNAP catalytic core consists of 2 alpha, 1 beta, 1 beta' and 1 omega subunit. When a sigma factor is associated with the core the holoenzyme is formed, which can initiate transcription.

The enzyme catalyses RNA(n) + a ribonucleoside 5'-triphosphate = RNA(n+1) + diphosphate. DNA-dependent RNA polymerase catalyzes the transcription of DNA into RNA using the four ribonucleoside triphosphates as substrates. This chain is DNA-directed RNA polymerase subunit beta, found in Clostridium novyi (strain NT).